Here is a 158-residue protein sequence, read N- to C-terminus: Protein-export protein SecB (158 aa).

Belongs to the SecB family. Homotetramer, a dimer of dimers. One homotetramer interacts with 1 SecA dimer.

Its subcellular location is the cytoplasm. Functionally, one of the proteins required for the normal export of preproteins out of the cell cytoplasm. It is a molecular chaperone that binds to a subset of precursor proteins, maintaining them in a translocation-competent state. It also specifically binds to its receptor SecA. This is Protein-export protein SecB from Anaplasma phagocytophilum (strain HZ).